Reading from the N-terminus, the 33-residue chain is Potassium channel toxin alpha-KTx 10.5 (33 aa).

Cystine bridges form between cysteine 4–cysteine 23, cysteine 9–cysteine 28, and cysteine 13–cysteine 30.

Expressed by the venom gland.

Its subcellular location is the secreted. Functionally, inhibits less than 5% of human voltage-gated potassium (Kv) channel Kv1.3/KCNA3 currents at 100nM concentration and does not block human Kv1.1/KCNA1 and Kv1.2/KCNA2 currents. The polypeptide is Potassium channel toxin alpha-KTx 10.5 (Centruroides bonito (Scorpion)).